The chain runs to 101 residues: Small ribosomal subunit protein uS14 (101 aa).

This sequence belongs to the universal ribosomal protein uS14 family. As to quaternary structure, part of the 30S ribosomal subunit. Contacts proteins S3 and S10.

In terms of biological role, binds 16S rRNA, required for the assembly of 30S particles and may also be responsible for determining the conformation of the 16S rRNA at the A site. This Actinobacillus pleuropneumoniae serotype 3 (strain JL03) protein is Small ribosomal subunit protein uS14.